The sequence spans 90 residues: MNKTQLIDFIAEKADLTKVQAKAALEATLGAVEGALKDGDQVQLIGFGTFKVNHRSARTGRNPKTGEEIKIAAANVPAFVAGKALKDAIK.

The protein belongs to the bacterial histone-like protein family. In terms of assembly, heterodimer of an alpha and a beta chain.

Its function is as follows. Histone-like DNA-binding protein which is capable of wrapping DNA to stabilize it, and thus to prevent its denaturation under extreme environmental conditions. This is DNA-binding protein HU-alpha (hupA) from Vibrio cholerae serotype O1 (strain ATCC 39315 / El Tor Inaba N16961).